Reading from the N-terminus, the 171-residue chain is 3-hydroxyanthranilate 3,4-dioxygenase (171 aa).

An O2-binding site is contributed by R45. Residues H49, E55, and H93 each contribute to the Fe cation site. E55 is a substrate binding site. Substrate contacts are provided by R97 and E107. C122, C125, C159, and C162 together coordinate a divalent metal cation.

The protein belongs to the 3-HAO family. Fe(2+) serves as cofactor.

It localises to the cytoplasm. The enzyme catalyses 3-hydroxyanthranilate + O2 = (2Z,4Z)-2-amino-3-carboxymuconate 6-semialdehyde. It functions in the pathway cofactor biosynthesis; NAD(+) biosynthesis; quinolinate from L-kynurenine: step 3/3. Functionally, catalyzes the oxidative ring opening of 3-hydroxyanthranilate to 2-amino-3-carboxymuconate semialdehyde, which spontaneously cyclizes to quinolinate. The chain is 3-hydroxyanthranilate 3,4-dioxygenase from Candida albicans (strain SC5314 / ATCC MYA-2876) (Yeast).